A 245-amino-acid chain; its full sequence is Methyltransferase-like protein 27 (245 aa).

The sequence is that of Methyltransferase-like protein 27 from Homo sapiens (Human).